The following is a 420-amino-acid chain: UDP-N-acetyl-D-mannosamine dehydrogenase (420 aa).

Tyrosine 13, isoleucine 14, aspartate 33, threonine 85, and threonine 126 together coordinate NAD(+). Residues arginine 160, valine 161, lysine 212, asparagine 216, arginine 219, histidine 250, arginine 252, and glycine 263 each contribute to the UDP-N-acetyl-alpha-D-mannosaminouronate site. The active-site Proton donor/acceptor is the lysine 212. The Nucleophile role is filled by cysteine 266. Residues phenylalanine 330 and lysine 331 each contribute to the UDP-N-acetyl-alpha-D-mannosaminouronate site. Arginine 338 lines the NAD(+) pocket. Lysine 416 contributes to the UDP-N-acetyl-alpha-D-mannosaminouronate binding site.

This sequence belongs to the UDP-glucose/GDP-mannose dehydrogenase family. WecC subfamily. In terms of assembly, homodimer.

It catalyses the reaction UDP-N-acetyl-alpha-D-mannosamine + 2 NAD(+) + H2O = UDP-N-acetyl-alpha-D-mannosaminouronate + 2 NADH + 3 H(+). The protein operates within bacterial outer membrane biogenesis; enterobacterial common antigen biosynthesis. Catalyzes the four-electron oxidation of UDP-N-acetyl-D-mannosamine (UDP-ManNAc), reducing NAD(+) and releasing UDP-N-acetylmannosaminuronic acid (UDP-ManNAcA). The sequence is that of UDP-N-acetyl-D-mannosamine dehydrogenase from Salmonella typhimurium (strain LT2 / SGSC1412 / ATCC 700720).